Reading from the N-terminus, the 142-residue chain is Probable pilin MJ0832.1 (142 aa).

Residues 1-8 (MLKFRKRG) constitute a propeptide that is removed on maturation. A QXSXEXXXL motif is present at residues 9-17 (QISLEFSLL).

In terms of processing, the N-terminus is cleaved by the prepilin peptidase EppA, which recognizes the class III signal sequence.

It localises to the secreted. The protein localises to the cell surface. The protein resides in the fimbrium. The protein is Probable pilin MJ0832.1 of Methanocaldococcus jannaschii (strain ATCC 43067 / DSM 2661 / JAL-1 / JCM 10045 / NBRC 100440) (Methanococcus jannaschii).